The chain runs to 177 residues: Nucleoside triphosphate/diphosphate phosphatase (177 aa).

Arg-23 functions as the Proton donor in the catalytic mechanism. Residues Asn-87, Asp-103, Asp-105, Asp-107, Asp-120, and Glu-123 each contribute to the Mg(2+) site.

It belongs to the Ntdp family. Mg(2+) is required as a cofactor.

The enzyme catalyses a ribonucleoside 5'-triphosphate + H2O = a ribonucleoside 5'-diphosphate + phosphate + H(+). It carries out the reaction a ribonucleoside 5'-diphosphate + H2O = a ribonucleoside 5'-phosphate + phosphate + H(+). Functionally, has nucleoside phosphatase activity towards nucleoside triphosphates and nucleoside diphosphates. This is Nucleoside triphosphate/diphosphate phosphatase from Streptococcus thermophilus (strain CNRZ 1066).